A 334-amino-acid chain; its full sequence is Sensor protein BceS (334 aa).

Residues 1–12 lie on the Cytoplasmic side of the membrane; that stretch reads MIKAFLIERRSW. A helical transmembrane segment spans residues 13–33; it reads IAAFLFQQALMLFIAFVDPSI. Ser-34 is a topological domain (extracellular). The chain crosses the membrane as a helical span at residues 35-55; that stretch reads FGNVLYMVYLCILFFIIFLWF. At 56–334 the chain is on the cytoplasmic side; it reads RYRKETAFYK…RNQFEHVISV (279 aa). One can recognise a Histidine kinase domain in the interval 121–326; sequence AWIHEVKTPL…VFTLTFPIRN (206 aa). His-124 is subject to Phosphohistidine; by autocatalysis.

The protein resides in the cell membrane. It catalyses the reaction ATP + protein L-histidine = ADP + protein N-phospho-L-histidine.. Functionally, member of the two-component regulatory system BceS/BceR involved in the regulation of bacitracin resistance. Activates BceR in response to extracellular bacitracin. The polypeptide is Sensor protein BceS (bceS) (Bacillus subtilis (strain 168)).